Reading from the N-terminus, the 275-residue chain is 4-hydroxy-tetrahydrodipicolinate reductase (275 aa).

Residues 13–18 (GAAGKM), 108–110 (GTT), and 134–137 (VPNF) each bind NAD(+). Histidine 164 functions as the Proton donor/acceptor in the catalytic mechanism. Histidine 165 contacts (S)-2,3,4,5-tetrahydrodipicolinate. Lysine 168 functions as the Proton donor in the catalytic mechanism. 174–175 (GT) contacts (S)-2,3,4,5-tetrahydrodipicolinate.

This sequence belongs to the DapB family.

It is found in the cytoplasm. It catalyses the reaction (S)-2,3,4,5-tetrahydrodipicolinate + NAD(+) + H2O = (2S,4S)-4-hydroxy-2,3,4,5-tetrahydrodipicolinate + NADH + H(+). It carries out the reaction (S)-2,3,4,5-tetrahydrodipicolinate + NADP(+) + H2O = (2S,4S)-4-hydroxy-2,3,4,5-tetrahydrodipicolinate + NADPH + H(+). Its pathway is amino-acid biosynthesis; L-lysine biosynthesis via DAP pathway; (S)-tetrahydrodipicolinate from L-aspartate: step 4/4. In terms of biological role, catalyzes the conversion of 4-hydroxy-tetrahydrodipicolinate (HTPA) to tetrahydrodipicolinate. The chain is 4-hydroxy-tetrahydrodipicolinate reductase from Gloeothece citriformis (strain PCC 7424) (Cyanothece sp. (strain PCC 7424)).